A 156-amino-acid polypeptide reads, in one-letter code: Small ribosomal subunit protein uS7 (156 aa).

This sequence belongs to the universal ribosomal protein uS7 family. Part of the 30S ribosomal subunit. Contacts proteins S9 and S11.

One of the primary rRNA binding proteins, it binds directly to 16S rRNA where it nucleates assembly of the head domain of the 30S subunit. Is located at the subunit interface close to the decoding center, probably blocks exit of the E-site tRNA. This is Small ribosomal subunit protein uS7 from Staphylococcus carnosus (strain TM300).